Reading from the N-terminus, the 521-residue chain is Envelope glycoprotein C homolog (521 aa).

An N-terminal signal peptide occupies residues 1–21 (MGPLGRAWLIAAIFAWALLSA). Residues 22 to 475 (RRGLAEEAEA…DASPGLIGSP (454 aa)) are Virion surface-facing. The disordered stretch occupies residues 24-138 (GLAEEAEASP…PSKAPPKERK (115 aa)). The span at 41 to 54 (PTETESSAGTTGAT) shows a compositional bias: low complexity. Polar residues predominate over residues 66-76 (EDSTPGATTPV). A glycan (N-linked (GlcNAc...) asparagine; by host) is linked at asparagine 111. A disulfide bridge links cysteine 142 with cysteine 159. Positions 155-227 (LYVHCGVADN…LGDNYIFPSP (73 aa)) constitute an Ig-like V-type domain. Asparagine 164 and asparagine 208 each carry an N-linked (GlcNAc...) asparagine; by host glycan. Cystine bridges form between cysteine 290-cysteine 351, cysteine 390-cysteine 447, and cysteine 394-cysteine 421. The Ig-like C2-type domain maps to 386 to 451 (GEAVCEARCV…PVDYTCTATG (66 aa)). The chain crosses the membrane as a helical span at residues 476–496 (VLVSVVAVACGLGAVGLLLVA). Topologically, residues 497 to 521 (ASCLRRKARVIQPGLTRARALGSAP) are cytoplasmic.

It belongs to the herpesviridae glycoprotein C family. Interacts with host complement component C3; this interaction inhibits host immune response by disregulating complement cascade.

It is found in the virion membrane. Essential for the initial attachment to heparan sulfate moieties of the host cell surface proteoglycans. Plays also a role in host immune evasion by inhibiting the host complement cascade activation. This is Envelope glycoprotein C homolog (gC) from Bovine herpesvirus 1.1 (strain Cooper) (BoHV-1).